The primary structure comprises 171 residues: 3-hydroxydecanoyl-[acyl-carrier-protein] dehydratase (171 aa).

The active site involves H69.

It belongs to the thioester dehydratase family. FabA subfamily. In terms of assembly, homodimer.

It localises to the cytoplasm. It carries out the reaction a (3R)-hydroxyacyl-[ACP] = a (2E)-enoyl-[ACP] + H2O. The catalysed reaction is (3R)-hydroxydecanoyl-[ACP] = (2E)-decenoyl-[ACP] + H2O. It catalyses the reaction (2E)-decenoyl-[ACP] = (3Z)-decenoyl-[ACP]. It functions in the pathway lipid metabolism; fatty acid biosynthesis. Necessary for the introduction of cis unsaturation into fatty acids. Catalyzes the dehydration of (3R)-3-hydroxydecanoyl-ACP to E-(2)-decenoyl-ACP and then its isomerization to Z-(3)-decenoyl-ACP. Can catalyze the dehydratase reaction for beta-hydroxyacyl-ACPs with saturated chain lengths up to 16:0, being most active on intermediate chain length. This chain is 3-hydroxydecanoyl-[acyl-carrier-protein] dehydratase, found in Caulobacter sp. (strain K31).